The following is a 177-amino-acid chain: Bifunctional protein PyrR (177 aa).

A PRPP-binding motif is present at residues 99–111; sequence VVLVDDVLFTGRT.

Belongs to the purine/pyrimidine phosphoribosyltransferase family. PyrR subfamily.

The enzyme catalyses UMP + diphosphate = 5-phospho-alpha-D-ribose 1-diphosphate + uracil. Its function is as follows. Regulates the transcription of the pyrimidine nucleotide (pyr) operon in response to exogenous pyrimidines. In terms of biological role, also displays a weak uracil phosphoribosyltransferase activity which is not physiologically significant. This is Bifunctional protein PyrR from Geobacter sp. (strain M21).